The following is a 1859-amino-acid chain: Retinitis pigmentosa 1-like 1 protein (1859 aa).

Disordered regions lie at residues 1 to 22 and 115 to 154; these read MNSTPGDTRDAPAPSHPAPSHR and RKPPKTSREPGRLQRKSPSAGQAQVFQGGHEAPETSYSWK. The region spanning 42–126 is the Doublecortin 1 domain; sequence KKITFLKRGD…PPKTSREPGR (85 aa). A compositionally biased stretch (basic and acidic residues) spans 115–126; the sequence is RKPPKTSREPGR. The span at 130–139 shows a compositional bias: polar residues; it reads KSPSAGQAQV. One can recognise a Doublecortin 2 domain in the interval 160–239; the sequence is RRLTLVKNGD…NEAFRCLEME (80 aa). 10 disordered regions span residues 263-301, 426-445, 457-593, 700-750, 868-920, 952-997, 1152-1211, 1227-1255, 1298-1350, and 1567-1859; these read PNAKQSVIHSRGRSGGKLRQVSLTSERSGLSDHPASGHR, IWRNPLATPEGTGPTPRRRW, WRQE…TQSH, MPQE…TSKA, CFGR…TPSA, NTEV…GVLS, TEDF…YPEL, ATGGEETGKGGRKQTWGNAPEQSVHSTML, GSQD…RVRE, and LQSK…DLDF. Basic and acidic residues predominate over residues 457–472; that stretch reads WRQEANHRKGHDKDNL. 2 stretches are compositionally biased toward polar residues: residues 499–512 and 535–551; these read GSDTLHPVSSASSH and PETQSTERALSDTSVSA. Positions 716–728 are enriched in low complexity; the sequence is SPSNSPSAGNQAS. The span at 734-750 shows a compositional bias: polar residues; it reads PFSSSLDLQEPQATSKA. Residues 870-883 are compositionally biased toward low complexity; it reads GRESASNGSTSSGH. 3 stretches are compositionally biased toward polar residues: residues 1241–1252, 1336–1345, and 1567–1577; these read TWGNAPEQSVHS, ESPQHFSESN, and LQSKKGGSSNR. Basic and acidic residues predominate over residues 1616–1632; the sequence is GEGKQRLRAEEDPEILK. Residues 1641–1652 show a composition bias toward acidic residues; that stretch reads PEEDEATEEDGE. The span at 1700-1720 shows a compositional bias: basic and acidic residues; sequence EASRERQQEVEGRHQDVKEDS. Residues 1756 to 1778 are compositionally biased toward polar residues; that stretch reads SHHTACSSRALSLDNSSQVSQKG.

As to quaternary structure, interacts with RP1; has a synergistic effect with RP1 in photoreceptor differentiation. As to expression, retinal-specific; expressed in photoreceptor.

The protein localises to the cytoplasm. The protein resides in the cytoskeleton. It localises to the cilium axoneme. It is found in the cell projection. Its subcellular location is the cilium. The protein localises to the photoreceptor outer segment. Functionally, required for the differentiation of photoreceptor cells. Plays a role in the organization of outer segment of rod and cone photoreceptors. In Mus musculus (Mouse), this protein is Retinitis pigmentosa 1-like 1 protein (Rp1l1).